The chain runs to 299 residues: Recombination-associated protein RdgC (299 aa).

It belongs to the RdgC family.

Its subcellular location is the cytoplasm. It localises to the nucleoid. Functionally, may be involved in recombination. The protein is Recombination-associated protein RdgC of Bordetella parapertussis (strain 12822 / ATCC BAA-587 / NCTC 13253).